A 150-amino-acid polypeptide reads, in one-letter code: FAD synthase (150 aa).

ATP contacts are provided by residues 11-12, 16-19, Asp-96, and Tyr-124; these read TF and HPGH.

Belongs to the archaeal FAD synthase family. As to quaternary structure, homodimer. A divalent metal cation is required as a cofactor.

The catalysed reaction is FMN + ATP + H(+) = FAD + diphosphate. It functions in the pathway cofactor biosynthesis; FAD biosynthesis; FAD from FMN: step 1/1. Its function is as follows. Catalyzes the transfer of the AMP portion of ATP to flavin mononucleotide (FMN) to produce flavin adenine dinucleotide (FAD) coenzyme. This is FAD synthase from Methanococcus maripaludis (strain C5 / ATCC BAA-1333).